A 297-amino-acid polypeptide reads, in one-letter code: Bifunctional protein FolD (297 aa).

Residues Gly-164 to Ser-166, Ser-193, and Ile-234 contribute to the NADP(+) site.

This sequence belongs to the tetrahydrofolate dehydrogenase/cyclohydrolase family. Homodimer.

It catalyses the reaction (6R)-5,10-methylene-5,6,7,8-tetrahydrofolate + NADP(+) = (6R)-5,10-methenyltetrahydrofolate + NADPH. The catalysed reaction is (6R)-5,10-methenyltetrahydrofolate + H2O = (6R)-10-formyltetrahydrofolate + H(+). It participates in one-carbon metabolism; tetrahydrofolate interconversion. In terms of biological role, catalyzes the oxidation of 5,10-methylenetetrahydrofolate to 5,10-methenyltetrahydrofolate and then the hydrolysis of 5,10-methenyltetrahydrofolate to 10-formyltetrahydrofolate. The protein is Bifunctional protein FolD of Halobacterium salinarum (strain ATCC 700922 / JCM 11081 / NRC-1) (Halobacterium halobium).